The chain runs to 332 residues: Adenosine receptor A2b (332 aa).

Residues 1–8 (MPLEAQDA) are Extracellular-facing. A helical transmembrane segment spans residues 9–33 (VYVALELALAALSVTGNVLVCAAVG). Topologically, residues 34 to 43 (TSSALQTPTN) are cytoplasmic. The helical transmembrane segment at 44 to 67 (YFLVSLAAADVAVGLFAIPFAVTI) threads the bilayer. At 68 to 78 (SLGFCTDFHSC) the chain is on the extracellular side. A disulfide bridge links C78 with C170. The helical transmembrane segment at 79–101 (LFLACFVLVLTQSSIFSLLAVAV) threads the bilayer. The Cytoplasmic segment spans residues 102-121 (DRYLAVRVPLRYKSLVTGAR). The helical transmembrane segment at 122 to 144 (ARGVIAALWVLAFGIGLTPFLGW) threads the bilayer. At 145-177 (NDRKIATNCTEPGDAATNVSCCLIRCLFENVVP) the chain is on the extracellular side. Residues N152 and N162 are each glycosylated (N-linked (GlcNAc...) asparagine). Position 173 (E173) interacts with adenosine. Residues 178-202 (MSYMVYFNFFGCVLPPLLIMLVIYV) form a helical membrane-spanning segment. Topologically, residues 203-234 (KIFLVACRQLQRTELMDHSRTVLQREIHAAKS) are cytoplasmic. Residues 235 to 258 (LALIVGIFALCWLPVHTINCASLF) form a helical membrane-spanning segment. N253 serves as a coordination point for adenosine. Topologically, residues 259–266 (QPTWAKVK) are extracellular. A helical transmembrane segment spans residues 267–290 (PKWAINTAILLSHANSAVNPIVYA). Residues S278 and H279 each coordinate adenosine. Topologically, residues 291–332 (YRNRDFRYTFHKIISRYILCRTHILKSGEGQVGSQPTLQLGL) are cytoplasmic. C310 is lipidated: S-palmitoyl cysteine.

This sequence belongs to the G-protein coupled receptor 1 family.

It is found in the cell membrane. Functionally, receptor for adenosine. The activity of this receptor is mediated by G proteins which activate adenylyl cyclase. The protein is Adenosine receptor A2b (ADORA2B) of Bos taurus (Bovine).